The sequence spans 555 residues: Membrane protein insertase YidC (555 aa).

Residues 7 to 24 (ILWVIFSMSLVLLYDNWQ) form a helical membrane-spanning segment. Residues 61-81 (TAGAAAPAAPGGAPQAAAQPT) form a disordered region. A run of 5 helical transmembrane segments spans residues 341–361 (GWLT…HGFL), 364–384 (WGWS…PLSA), 430–450 (LGGC…YWVL), 468–488 (LSVP…MFVQ), and 503–523 (VMMI…AGLV).

Belongs to the OXA1/ALB3/YidC family. Type 1 subfamily. As to quaternary structure, interacts with the Sec translocase complex via SecD. Specifically interacts with transmembrane segments of nascent integral membrane proteins during membrane integration.

It is found in the cell inner membrane. In terms of biological role, required for the insertion and/or proper folding and/or complex formation of integral membrane proteins into the membrane. Involved in integration of membrane proteins that insert both dependently and independently of the Sec translocase complex, as well as at least some lipoproteins. Aids folding of multispanning membrane proteins. This is Membrane protein insertase YidC from Cupriavidus pinatubonensis (strain JMP 134 / LMG 1197) (Cupriavidus necator (strain JMP 134)).